The following is a 572-amino-acid chain: Phosphoenolpyruvate-protein phosphotransferase (572 aa).

H191 serves as the catalytic Tele-phosphohistidine intermediate. Residues R298 and R334 each contribute to the phosphoenolpyruvate site. Mg(2+) contacts are provided by E433 and D457. Residues 456–457 and R467 contribute to the phosphoenolpyruvate site; that span reads ND. C504 acts as the Proton donor in catalysis.

The protein belongs to the PEP-utilizing enzyme family. As to quaternary structure, homodimer. It depends on Mg(2+) as a cofactor.

It is found in the cytoplasm. It catalyses the reaction L-histidyl-[protein] + phosphoenolpyruvate = N(pros)-phospho-L-histidyl-[protein] + pyruvate. In terms of biological role, general (non sugar-specific) component of the phosphoenolpyruvate-dependent sugar phosphotransferase system (sugar PTS). This major carbohydrate active-transport system catalyzes the phosphorylation of incoming sugar substrates concomitantly with their translocation across the cell membrane. Enzyme I transfers the phosphoryl group from phosphoenolpyruvate (PEP) to the phosphoryl carrier protein (HPr). The sequence is that of Phosphoenolpyruvate-protein phosphotransferase (ptsI) from Staphylococcus aureus (strain COL).